A 78-amino-acid chain; its full sequence is Apolipoprotein C-I (78 aa).

A signal peptide spans 1–26 (MRLILWLPVLVVVLLMVLEGPAPAQG).

This sequence belongs to the apolipoprotein C1 family.

Its subcellular location is the secreted. Its function is as follows. Inhibitor of lipoprotein binding to the low density lipoprotein (LDL) receptor, LDL receptor-related protein, and very low density lipoprotein (VLDL) receptor. Associates with high density lipoproteins (HDL) and the triacylglycerol-rich lipoproteins in the plasma and makes up about 10% of the protein of the VLDL and 2% of that of HDL. Appears to interfere directly with fatty acid uptake and is also the major plasma inhibitor of cholesteryl ester transfer protein (CETP). Binds free fatty acids and reduces their intracellular esterification. Modulates the interaction of APOE with beta-migrating VLDL and inhibits binding of beta-VLDL to the LDL receptor-related protein. The protein is Apolipoprotein C-I (APOC1) of Puma concolor (Mountain lion).